Here is a 132-residue protein sequence, read N- to C-terminus: Small ribosomal subunit protein uS11 (132 aa).

Belongs to the universal ribosomal protein uS11 family. As to quaternary structure, part of the 30S ribosomal subunit.

Located on the platform of the 30S subunit. The protein is Small ribosomal subunit protein uS11 of Saccharolobus solfataricus (strain ATCC 35092 / DSM 1617 / JCM 11322 / P2) (Sulfolobus solfataricus).